The primary structure comprises 220 residues: N-(5'-phosphoribosyl)anthranilate isomerase (220 aa).

Belongs to the TrpF family.

The catalysed reaction is N-(5-phospho-beta-D-ribosyl)anthranilate = 1-(2-carboxyphenylamino)-1-deoxy-D-ribulose 5-phosphate. The protein operates within amino-acid biosynthesis; L-tryptophan biosynthesis; L-tryptophan from chorismate: step 3/5. This is N-(5'-phosphoribosyl)anthranilate isomerase from Leptothrix cholodnii (strain ATCC 51168 / LMG 8142 / SP-6) (Leptothrix discophora (strain SP-6)).